The sequence spans 437 residues: Cytochrome c biogenesis protein Ccs1 (437 aa).

The next 3 membrane-spanning stretches (helical) occupy residues 23–43 (LQFSIILLLVIASFSVIGTII), 82–102 (TWWFLTLLFIFSLSLLVCSLS), and 168–188 (LAPIFVHASIILLLIGSVLGL).

This sequence belongs to the Ccs1/CcsB family. May interact with CcsA.

The protein localises to the plastid. Its subcellular location is the chloroplast thylakoid membrane. Functionally, required during biogenesis of c-type cytochromes (cytochrome c6 and cytochrome f) at the step of heme attachment. The chain is Cytochrome c biogenesis protein Ccs1 from Porphyra purpurea (Red seaweed).